A 136-amino-acid chain; its full sequence is Small ribosomal subunit protein uS9 (136 aa).

Residues 97–136 (SPDNRKPLKTEGHLSRDPRAKERRKYGLKKARKAPQFSKR) are disordered. A compositionally biased stretch (basic and acidic residues) spans 98–116 (PDNRKPLKTEGHLSRDPRA). Positions 117 to 136 (KERRKYGLKKARKAPQFSKR) are enriched in basic residues.

It belongs to the universal ribosomal protein uS9 family.

The protein is Small ribosomal subunit protein uS9 of Prochlorococcus marinus (strain MIT 9301).